Consider the following 366-residue polypeptide: Aldo-keto reductase AFTS1 (366 aa).

Asp75 lines the NADP(+) pocket. Tyr80 (proton donor) is an active-site residue. A substrate-binding site is contributed by His172. Residues 202–203, Gln228, 257–267, and 329–337 each bind NADP(+); these read SS, GSLASGRLARP, and SSVERIDEA.

Belongs to the aldo/keto reductase family.

The protein operates within mycotoxin biosynthesis. In terms of biological role, aldo-keto reductase; part of the gene clusters that mediate the biosynthesis of the host-selective toxins (HSTs) AF-toxins responsible for Alternaria black spot of strawberry disease by the strawberry pathotype. AF-toxin I and III are valine derivatives of 2,3-dyhydroxy-isovaleric acid and 2-hydroxy-isovaleric acid respectively, while AF II is an isoleucine derivative of 2-hydroxy-valeric acid. These derivatives are bound to a 9,10-epoxy-8-hydroxy-9-methyl-decatrienoic acid (EDA) moiety. On cellular level, AF-toxins affect plasma membrane of susceptible cells and cause a sudden increase in loss of K(+) after a few minutes of toxin treatment. The aldo-keto reductase AFTS1 catalyzes the conversion of 2-keto-isovaleric acid (2-KIV) to 2-hydroxy-isovaleric acid (2-HIV) by reduction of its ketone to an alcohol. The acyl-CoA ligase AFT1, the hydrolase AFT2 and the enoyl-CoA hydratases AFT3 and AFT6, but also the polyketide synthase AFT9, the acyl-CoA dehydrogenase AFT10, the cytochrome P450 monooxygenase AFT11 and the oxidoreductase AFT12 are all involved in the biosynthesis of the AK-, AF- and ACT-toxin common EDA structural moiety. The exact function of each enzyme, and of additional enzymes identified within the AF-toxin clusters have still to be determined. This Alternaria alternata (Alternaria rot fungus) protein is Aldo-keto reductase AFTS1.